The chain runs to 892 residues: Alanine--tRNA ligase (892 aa).

Positions 596, 600, 700, and 704 each coordinate Zn(2+).

Belongs to the class-II aminoacyl-tRNA synthetase family. It depends on Zn(2+) as a cofactor.

The protein resides in the cytoplasm. The enzyme catalyses tRNA(Ala) + L-alanine + ATP = L-alanyl-tRNA(Ala) + AMP + diphosphate. Its function is as follows. Catalyzes the attachment of alanine to tRNA(Ala) in a two-step reaction: alanine is first activated by ATP to form Ala-AMP and then transferred to the acceptor end of tRNA(Ala). Also edits incorrectly charged Ser-tRNA(Ala) and Gly-tRNA(Ala) via its editing domain. This is Alanine--tRNA ligase from Methanococcus maripaludis (strain C6 / ATCC BAA-1332).